A 287-amino-acid chain; its full sequence is ATP synthase gamma chain (287 aa).

Belongs to the ATPase gamma chain family. As to quaternary structure, F-type ATPases have 2 components, CF(1) - the catalytic core - and CF(0) - the membrane proton channel. CF(1) has five subunits: alpha(3), beta(3), gamma(1), delta(1), epsilon(1). CF(0) has three main subunits: a, b and c.

The protein localises to the cell inner membrane. In terms of biological role, produces ATP from ADP in the presence of a proton gradient across the membrane. The gamma chain is believed to be important in regulating ATPase activity and the flow of protons through the CF(0) complex. This Cronobacter sakazakii (strain ATCC BAA-894) (Enterobacter sakazakii) protein is ATP synthase gamma chain.